A 391-amino-acid chain; its full sequence is Fructose-bisphosphate aldolase 3, chloroplastic (391 aa).

The N-terminal 40 residues, 1-40, are a transit peptide targeting the chloroplast; it reads MASASFVKPNTLSSPWIGQRSFAHTSASSSPPPRVSFAIR. Residue Arg88 coordinates substrate. A Phosphoserine modification is found at Ser150. Lys178 is a binding site for substrate. The residue at position 208 (Ser208) is a Phosphoserine. The active-site Proton acceptor is the Glu218. Lys260 functions as the Schiff-base intermediate with dihydroxyacetone-P in the catalytic mechanism. Residue 302–304 participates in substrate binding; sequence SGG. Lys387 is modified (N6,N6,N6-trimethyllysine).

This sequence belongs to the class I fructose-bisphosphate aldolase family. In terms of assembly, homotetramer. Can be trimethylated at Lys-387 by LSMT-L, but the trimethylation has no effect in vitro. Post-translationally, S-glutathionylated. As to expression, expressed in roots, and at low levels in rosettes leaves, cauline leaves, stems and flowers.

The protein localises to the plastid. It localises to the chloroplast. The protein resides in the plastoglobule. The enzyme catalyses beta-D-fructose 1,6-bisphosphate = D-glyceraldehyde 3-phosphate + dihydroxyacetone phosphate. Its pathway is carbohydrate degradation; glycolysis; D-glyceraldehyde 3-phosphate and glycerone phosphate from D-glucose: step 4/4. Functionally, plays a key role in glycolysis and gluconeogenesis. The protein is Fructose-bisphosphate aldolase 3, chloroplastic of Arabidopsis thaliana (Mouse-ear cress).